The following is a 196-amino-acid chain: MYPVPTVIEQSSRGERAYDIYSRLLKDRIIMLSGPIEDNMANAIIAQLLFLDAQDSGKDIYLYINSPGGVVTAGLAIYDTMNFIKSDVQTIVMGMAASMASVLASSGTKGKRFALPNSEILIHQPSGGAQGQQTEIEIVAEEILKTRKKINQILADNSGQSVEKLNHDTERDNYLSAQEAKDYGLIDDIMENNKLK.

The active-site Nucleophile is the Ser-98. The active site involves His-123.

The protein belongs to the peptidase S14 family. Fourteen ClpP subunits assemble into 2 heptameric rings which stack back to back to give a disk-like structure with a central cavity, resembling the structure of eukaryotic proteasomes.

Its subcellular location is the cytoplasm. The catalysed reaction is Hydrolysis of proteins to small peptides in the presence of ATP and magnesium. alpha-casein is the usual test substrate. In the absence of ATP, only oligopeptides shorter than five residues are hydrolyzed (such as succinyl-Leu-Tyr-|-NHMec, and Leu-Tyr-Leu-|-Tyr-Trp, in which cleavage of the -Tyr-|-Leu- and -Tyr-|-Trp bonds also occurs).. Its function is as follows. Cleaves peptides in various proteins in a process that requires ATP hydrolysis. Has a chymotrypsin-like activity. Plays a major role in the degradation of misfolded proteins. The chain is ATP-dependent Clp protease proteolytic subunit from Lactiplantibacillus plantarum (strain ATCC BAA-793 / NCIMB 8826 / WCFS1) (Lactobacillus plantarum).